The following is a 178-amino-acid chain: ATP synthase subunit delta (178 aa).

It belongs to the ATPase delta chain family. In terms of assembly, F-type ATPases have 2 components, F(1) - the catalytic core - and F(0) - the membrane proton channel. F(1) has five subunits: alpha(3), beta(3), gamma(1), delta(1), epsilon(1). F(0) has three main subunits: a(1), b(2) and c(10-14). The alpha and beta chains form an alternating ring which encloses part of the gamma chain. F(1) is attached to F(0) by a central stalk formed by the gamma and epsilon chains, while a peripheral stalk is formed by the delta and b chains.

It is found in the cell membrane. In terms of biological role, f(1)F(0) ATP synthase produces ATP from ADP in the presence of a proton or sodium gradient. F-type ATPases consist of two structural domains, F(1) containing the extramembraneous catalytic core and F(0) containing the membrane proton channel, linked together by a central stalk and a peripheral stalk. During catalysis, ATP synthesis in the catalytic domain of F(1) is coupled via a rotary mechanism of the central stalk subunits to proton translocation. This protein is part of the stalk that links CF(0) to CF(1). It either transmits conformational changes from CF(0) to CF(1) or is implicated in proton conduction. This chain is ATP synthase subunit delta, found in Streptococcus pyogenes serotype M1.